The sequence spans 312 residues: Ribosomal RNA small subunit methyltransferase H (312 aa).

Residues 34–36 (AGH), Asp-54, Phe-81, Asp-102, and Gln-109 each bind S-adenosyl-L-methionine.

The protein belongs to the methyltransferase superfamily. RsmH family.

The protein resides in the cytoplasm. The catalysed reaction is cytidine(1402) in 16S rRNA + S-adenosyl-L-methionine = N(4)-methylcytidine(1402) in 16S rRNA + S-adenosyl-L-homocysteine + H(+). In terms of biological role, specifically methylates the N4 position of cytidine in position 1402 (C1402) of 16S rRNA. This Geotalea daltonii (strain DSM 22248 / JCM 15807 / FRC-32) (Geobacter daltonii) protein is Ribosomal RNA small subunit methyltransferase H.